The sequence spans 459 residues: METVFEEMDEESTGGVSSSKEEIVLGQRLHLSFPFSIIFSTVLYCGEVAFGLYMFEIYRKANDTFWMSFTISFIIVGAILDQIILMFFNKDLRRNKAALLFWHILLLGPIVRCLHTIRNYHKWLKNLKQEKEETQVSITKRNTMLEREIAFSIRDNFMQQKAFKYMSVIQAFLGSVPQLILQMYISLTIREWPLNRALLMTFSLLSVTYGAIRCNILAIQISNDDTTIKLPPIEFFCVVMWRFLEVISRVVTLAFFIASLKLKSLPVLLIIYFVSLLAPWLEFWKSGAHLPGNKENNSNMVGTVLMLFLITLLYAAINFSCWSAVKLQLSDDKIIDGRQRWGHRILHYSFQFLENVIMILVFRFFGGKTLLNCCDSLIAVQLIISYLLATGFMLLFYQYLYPWQSGKVLPGRTENQPEAPYYYVNIEKTEKNKNKQLRNYCHSCNRVGYFSIRKSMTCS.

10 helical membrane passes run Phe-35–Phe-55, Ser-68–Phe-88, Ala-97–Ile-117, Ile-169–Ile-189, Leu-199–Ile-219, Val-238–Ala-258, Ser-264–Trp-284, Met-300–Ser-320, Ile-345–Phe-365, and Leu-377–Tyr-397.

Belongs to the XK family. Expressed predominantly, if not exclusively, in testis.

The protein localises to the cell membrane. The protein is XK-related protein 3 (XKR3) of Homo sapiens (Human).